A 323-amino-acid polypeptide reads, in one-letter code: Beta-ketoacyl-[acyl-carrier-protein] synthase III (323 aa).

Active-site residues include C113 and H250. Residues Q251 to R255 are ACP-binding. The active site involves N280.

Belongs to the thiolase-like superfamily. FabH family. Homodimer.

Its subcellular location is the cytoplasm. It carries out the reaction malonyl-[ACP] + acetyl-CoA + H(+) = 3-oxobutanoyl-[ACP] + CO2 + CoA. The protein operates within lipid metabolism; fatty acid biosynthesis. Functionally, catalyzes the condensation reaction of fatty acid synthesis by the addition to an acyl acceptor of two carbons from malonyl-ACP. Catalyzes the first condensation reaction which initiates fatty acid synthesis and may therefore play a role in governing the total rate of fatty acid production. Possesses both acetoacetyl-ACP synthase and acetyl transacylase activities. Its substrate specificity determines the biosynthesis of branched-chain and/or straight-chain of fatty acids. The protein is Beta-ketoacyl-[acyl-carrier-protein] synthase III of Rhizobium rhizogenes (strain K84 / ATCC BAA-868) (Agrobacterium radiobacter).